A 152-amino-acid chain; its full sequence is Large ribosomal subunit protein eL32 (152 aa).

Belongs to the eukaryotic ribosomal protein eL32 family.

The chain is Large ribosomal subunit protein eL32 (rpl32e) from Pyrobaculum aerophilum (strain ATCC 51768 / DSM 7523 / JCM 9630 / CIP 104966 / NBRC 100827 / IM2).